Consider the following 110-residue polypeptide: Ribonuclease P protein component (110 aa).

This sequence belongs to the RnpA family. As to quaternary structure, consists of a catalytic RNA component (M1 or rnpB) and a protein subunit.

It catalyses the reaction Endonucleolytic cleavage of RNA, removing 5'-extranucleotides from tRNA precursor.. Functionally, RNaseP catalyzes the removal of the 5'-leader sequence from pre-tRNA to produce the mature 5'-terminus. It can also cleave other RNA substrates such as 4.5S RNA. The protein component plays an auxiliary but essential role in vivo by binding to the 5'-leader sequence and broadening the substrate specificity of the ribozyme. This chain is Ribonuclease P protein component, found in Mesorhizobium japonicum (strain LMG 29417 / CECT 9101 / MAFF 303099) (Mesorhizobium loti (strain MAFF 303099)).